The sequence spans 97 residues: Antitoxin YafN (97 aa).

Belongs to the phD/YefM antitoxin family. As to quaternary structure, probably forms a complex with the mRNA interferase YafO which inhibits the mRNA interferase activity.

Antitoxin component of a type II toxin-antitoxin (TA) system. Functions as an mRNA interferase antitoxin; overexpression prevents YafO-mediated cessation of cell growth and inhibition of cell proliferation. This is Antitoxin YafN (yafN) from Escherichia coli (strain K12).